The sequence spans 354 residues: ATPase GET3 (354 aa).

ATP is bound at residue 26–33 (KGGVGKTT). Residue aspartate 57 is part of the active site. ATP is bound by residues glutamate 245 and asparagine 272. 2 residues coordinate Zn(2+): cysteine 285 and cysteine 288.

It belongs to the arsA ATPase family. In terms of assembly, homodimer. Component of the Golgi to ER traffic (GET) complex, which is composed of GET1, GET2 and GET3. Within the complex, GET1 and GET2 form a heterotetramer which is stabilized by phosphatidylinositol binding and which binds to the GET3 homodimer. Interacts with the chloride channel protein GEF1.

The protein resides in the cytoplasm. The protein localises to the endoplasmic reticulum. Its subcellular location is the golgi apparatus. In terms of biological role, ATPase required for the post-translational delivery of tail-anchored (TA) proteins to the endoplasmic reticulum. Recognizes and selectively binds the transmembrane domain of TA proteins in the cytosol. This complex then targets to the endoplasmic reticulum by membrane-bound receptors GET1 and GET2, where the tail-anchored protein is released for insertion. This process is regulated by ATP binding and hydrolysis. ATP binding drives the homodimer towards the closed dimer state, facilitating recognition of newly synthesized TA membrane proteins. ATP hydrolysis is required for insertion. Subsequently, the homodimer reverts towards the open dimer state, lowering its affinity for the GET1-GET2 receptor, and returning it to the cytosol to initiate a new round of targeting. Cooperates with the HDEL receptor ERD2 to mediate the ATP-dependent retrieval of resident ER proteins that contain a C-terminal H-D-E-L retention signal from the Golgi to the ER. Involved in low-level resistance to the oxyanions arsenite and arsenate, and in heat tolerance. The chain is ATPase GET3 from Saccharomyces cerevisiae (strain RM11-1a) (Baker's yeast).